Consider the following 192-residue polypeptide: MYQDLIRNELNEAAETLANFLKDDANIHAIQRAAVLLADSFKAGGKVLSCGNGGSHCDAMHFAEELTGRYRENRPGYPAIAISDVSHISCVSNDFGYDYIFSRYVEAVGREGDVLLGISTSGNSGNVIKAIAAAREKGMKVITLTGKDGGKMAGTADIEIRVPHFGYADRIQEIHIKVIHILIQLIEKEMVK.

An SIS domain is found at 37–192 (LADSFKAGGK…IQLIEKEMVK (156 aa)). Position 52–54 (52–54 (NGG)) interacts with substrate. Positions 61 and 65 each coordinate Zn(2+). Substrate contacts are provided by residues Glu-65, 93–94 (ND), 119–121 (STS), Ser-124, and Gln-172. 2 residues coordinate Zn(2+): Gln-172 and His-180.

It belongs to the SIS family. GmhA subfamily. As to quaternary structure, homotetramer. It depends on Zn(2+) as a cofactor.

The protein localises to the cytoplasm. It carries out the reaction 2 D-sedoheptulose 7-phosphate = D-glycero-alpha-D-manno-heptose 7-phosphate + D-glycero-beta-D-manno-heptose 7-phosphate. It participates in carbohydrate biosynthesis; D-glycero-D-manno-heptose 7-phosphate biosynthesis; D-glycero-alpha-D-manno-heptose 7-phosphate and D-glycero-beta-D-manno-heptose 7-phosphate from sedoheptulose 7-phosphate: step 1/1. In terms of biological role, catalyzes the isomerization of sedoheptulose 7-phosphate in D-glycero-D-manno-heptose 7-phosphate. This chain is Phosphoheptose isomerase, found in Salmonella agona (strain SL483).